The sequence spans 355 residues: Protein RecA (355 aa).

67-74 is an ATP binding site; it reads GPESSGKT. The disordered stretch occupies residues 331–355; that stretch reads NQDDKPDFTPAAHEVDEGSEAKENF.

Belongs to the RecA family.

Its subcellular location is the cytoplasm. In terms of biological role, can catalyze the hydrolysis of ATP in the presence of single-stranded DNA, the ATP-dependent uptake of single-stranded DNA by duplex DNA, and the ATP-dependent hybridization of homologous single-stranded DNAs. It interacts with LexA causing its activation and leading to its autocatalytic cleavage. The chain is Protein RecA from Erwinia tasmaniensis (strain DSM 17950 / CFBP 7177 / CIP 109463 / NCPPB 4357 / Et1/99).